The following is a 717-amino-acid chain: Fatty acid oxidation complex subunit alpha (717 aa).

Positions 1–189 (MIYQSPTIEV…KVGAIDAVVA (189 aa)) are enoyl-CoA hydratase/isomerase. Asp296 serves as a coordination point for substrate. A 3-hydroxyacyl-CoA dehydrogenase region spans residues 311–717 (KKVNSAAVLG…ANNGSYYQQA (407 aa)). NAD(+) contacts are provided by residues Met324, Asp343, 400 to 402 (VVE), Lys407, and Ser429. His450 acts as the For 3-hydroxyacyl-CoA dehydrogenase activity in catalysis. Residue Asn453 participates in NAD(+) binding. 2 residues coordinate substrate: Asn500 and Tyr660.

It in the N-terminal section; belongs to the enoyl-CoA hydratase/isomerase family. In the C-terminal section; belongs to the 3-hydroxyacyl-CoA dehydrogenase family. In terms of assembly, heterotetramer of two alpha chains (FadB) and two beta chains (FadA).

It carries out the reaction a (3S)-3-hydroxyacyl-CoA + NAD(+) = a 3-oxoacyl-CoA + NADH + H(+). The catalysed reaction is a (3S)-3-hydroxyacyl-CoA = a (2E)-enoyl-CoA + H2O. It catalyses the reaction a 4-saturated-(3S)-3-hydroxyacyl-CoA = a (3E)-enoyl-CoA + H2O. The enzyme catalyses (3S)-3-hydroxybutanoyl-CoA = (3R)-3-hydroxybutanoyl-CoA. It carries out the reaction a (3Z)-enoyl-CoA = a 4-saturated (2E)-enoyl-CoA. The catalysed reaction is a (3E)-enoyl-CoA = a 4-saturated (2E)-enoyl-CoA. It participates in lipid metabolism; fatty acid beta-oxidation. In terms of biological role, involved in the aerobic and anaerobic degradation of long-chain fatty acids via beta-oxidation cycle. Catalyzes the formation of 3-oxoacyl-CoA from enoyl-CoA via L-3-hydroxyacyl-CoA. It can also use D-3-hydroxyacyl-CoA and cis-3-enoyl-CoA as substrate. This chain is Fatty acid oxidation complex subunit alpha, found in Shewanella halifaxensis (strain HAW-EB4).